A 133-amino-acid polypeptide reads, in one-letter code: Agouti-signaling protein (133 aa).

A signal peptide spans 1–22 (MDVSRLLLATLLVCLCFLTAYS). Asn-39 is a glycosylation site (N-linked (GlcNAc...) asparagine). The tract at residues 56-95 (NKKSKKISRNEAEKKKRPSKRKAPMKNVARTRPPPPTPCV) is disordered. The segment covering 70 to 79 (KKRPSKRKAP) has biased composition (basic residues). 5 disulfides stabilise this stretch: Cys-94–Cys-109, Cys-101–Cys-115, Cys-108–Cys-126, Cys-112–Cys-133, and Cys-117–Cys-124. Positions 94 to 133 (CVATRDSCKPPAPACCDPCAFCQCRFFRSACSCRVLNPTC) constitute an Agouti domain.

The protein resides in the secreted. Involved in the regulation of melanogenesis. The binding of ASP to MC1R precludes alpha-MSH initiated signaling and thus blocks production of cAMP, leading to a down-regulation of eumelanogenesis (brown/black pigment) and thus increasing synthesis of pheomelanin (yellow/red pigment). The chain is Agouti-signaling protein (ASIP) from Bos taurus (Bovine).